The sequence spans 336 residues: Zinc-type alcohol dehydrogenase-like protein SE_1777 (336 aa).

The protein belongs to the zinc-containing alcohol dehydrogenase family. Quinone oxidoreductase subfamily.

The polypeptide is Zinc-type alcohol dehydrogenase-like protein SE_1777 (Staphylococcus epidermidis (strain ATCC 12228 / FDA PCI 1200)).